The sequence spans 40 residues: Photosystem II reaction center protein J (40 aa).

The helical transmembrane segment at 8 to 28 threads the bilayer; the sequence is IPLWLIGTIAGILVIGLVGIF.

The protein belongs to the PsbJ family. PSII is composed of 1 copy each of membrane proteins PsbA, PsbB, PsbC, PsbD, PsbE, PsbF, PsbH, PsbI, PsbJ, PsbK, PsbL, PsbM, PsbT, PsbX, PsbY, PsbZ, Psb30/Ycf12, at least 3 peripheral proteins of the oxygen-evolving complex and a large number of cofactors. It forms dimeric complexes.

It localises to the plastid. It is found in the chloroplast thylakoid membrane. In terms of biological role, one of the components of the core complex of photosystem II (PSII). PSII is a light-driven water:plastoquinone oxidoreductase that uses light energy to abstract electrons from H(2)O, generating O(2) and a proton gradient subsequently used for ATP formation. It consists of a core antenna complex that captures photons, and an electron transfer chain that converts photonic excitation into a charge separation. The polypeptide is Photosystem II reaction center protein J (Anthoceros angustus (Hornwort)).